The chain runs to 297 residues: ATP phosphoribosyltransferase (297 aa).

N-acetylmethionine is present on Met1.

It belongs to the ATP phosphoribosyltransferase family.

The protein localises to the cytoplasm. It carries out the reaction 1-(5-phospho-beta-D-ribosyl)-ATP + diphosphate = 5-phospho-alpha-D-ribose 1-diphosphate + ATP. It participates in amino-acid biosynthesis; L-histidine biosynthesis; L-histidine from 5-phospho-alpha-D-ribose 1-diphosphate: step 1/9. Functionally, catalyzes the condensation of ATP and 5-phosphoribose 1-diphosphate to form N'-(5'-phosphoribosyl)-ATP (PR-ATP). Has a crucial role in the pathway because the rate of histidine biosynthesis seems to be controlled primarily by regulation of the enzymatic activity. The protein is ATP phosphoribosyltransferase (HIS1) of Saccharomyces cerevisiae (strain ATCC 204508 / S288c) (Baker's yeast).